Reading from the N-terminus, the 194-residue chain is Large ribosomal subunit protein uL6m (194 aa).

This sequence belongs to the universal ribosomal protein uL6 family.

It is found in the mitochondrion. This chain is Large ribosomal subunit protein uL6m (RPL6), found in Prototheca wickerhamii.